A 272-amino-acid polypeptide reads, in one-letter code: Zinc finger protein 32 (272 aa).

Residues 50 to 65 show a composition bias toward basic and acidic residues; the sequence is RREKLEQKSPESKALQ. The segment at 50 to 69 is disordered; it reads RREKLEQKSPESKALQEDSP. 3 C2H2-type zinc fingers span residues 76 to 98, 104 to 126, and 132 to 154; these read YDCQ…ERIH, FECT…QRIH, and YQCK…ERLH. 20 residues coordinate Zn(2+): Cys-78, Cys-81, His-94, His-98, Cys-106, Cys-109, His-122, His-126, Ser-140, Gln-143, Gly-156, Tyr-160, Phe-197, Lys-200, Leu-213, Ala-217, Cys-246, Cys-249, His-262, and Cys-266. C2H2-type zinc fingers lie at residues 160 to 182 and 188 to 210; these read YECA…RRVH and YRCD…IRVH. A C2H2-type 6 zinc finger spans residues 216 to 238; sequence YACSHCRKSFHTRGNCLLHGKVH. The segment at 244–266 adopts a CCHC-type zinc-finger fold; it reads YLCGQCGKSFTQRGSLAVHQRSC.

The protein belongs to the krueppel C2H2-type zinc-finger protein family.

It localises to the nucleus. Its function is as follows. May be involved in transcriptional regulation. This chain is Zinc finger protein 32 (Znf32), found in Mus musculus (Mouse).